The sequence spans 396 residues: Microcin B17-processing protein McbD (396 aa).

The YcaO domain maps to 41 to 396; that stretch reads ASAAGETLKS…VRESKMVPFP (356 aa).

Its subcellular location is the cytoplasm. In terms of biological role, necessary to process the inactive microcin B17 (McbA) precursor into the active peptide. The protein is Microcin B17-processing protein McbD (mcbD) of Escherichia coli.